We begin with the raw amino-acid sequence, 55 residues long: MASSTDVRPKITLACEVCKHRNYITKKNRRNDPDRLELKKFCPNCGTHRAHKESR.

The protein belongs to the bacterial ribosomal protein bL33 family.

This chain is Large ribosomal subunit protein bL33A, found in Mycobacterium sp. (strain KMS).